The chain runs to 480 residues: Sestrin-2 (480 aa).

Met-1 carries the post-translational modification N-acetylmethionine. A disordered region spans residues 20–43 (RGGVAGPETREEHREGQARRGSRG). Basic and acidic residues predominate over residues 27–37 (ETREEHREGQA). Residues 66–239 (GLEALMSSGR…APSPPSEQGT (174 aa)) form an N-terminal domain; mediates the alkylhydroperoxide reductase activity region. The Cysteine sulfenic acid (-SOH) intermediate role is filled by Cys-125. Lys-175 is covalently cross-linked (Glycyl lysine isopeptide (Lys-Gly) (interchain with G-Cter in ubiquitin)). Disordered regions lie at residues 221–251 (DAEG…NSGG) and 272–291 (LLRD…ELEK). A compositionally biased stretch (low complexity) spans 223-238 (EGSPASQAPSPPSEQG). Ser-249 carries the phosphoserine modification. Residues 308–480 (PHPDILCFVE…ALRAITRYMT (173 aa)) form a C-terminal domain; mediates TORC1 regulation region. L-leucine contacts are provided by residues 374 to 377 (TYNT), Thr-386, and Glu-451.

Belongs to the sestrin family. In terms of assembly, interacts with the GATOR2 complex which is composed of MIOS, SEC13, SEH1L, WDR24 and WDR59; the interaction is negatively regulated by leucine. Conveys leucine availability via direct interaction with SEH1L and WDR24 components of the GATOR2 complex. Interacts with RRAGA, RRAGB, RRAGC and RRAGD; may function as a guanine nucleotide dissociation inhibitor for RRAGs and regulate them. May interact with the TORC2 complex. Interacts with KEAP1, RBX1, SQSTM and ULK1; to regulate the degradation of KEAP1. May also associate with the complex composed of TSC1, TSC2 and the AMP-responsive protein kinase/AMPK to regulate TORC1 signaling. May interact with PRDX1. In terms of processing, phosphorylated by ULK1 at multiple sites. Post-translationally, ubiquitinated at Lys-175 by RNF167 via 'Lys-63'-linked polyubiquitination in response to leucine deprivation: ubiquitination promotes SESN2-interaction with the GATOR2 complex, leading to inhibit the TORC1 signaling pathway. Deubiquitinated at Lys-175 by STAMBPL1, promoting the TORC1 signaling pathway. Ubiquitinated by RNF186; ubiquitination mediates proteasomal degradation. In terms of tissue distribution, detected in heart, liver and skeletal muscles (at protein level).

The protein localises to the cytoplasm. The enzyme catalyses a hydroperoxide + L-cysteinyl-[protein] = S-hydroxy-L-cysteinyl-[protein] + an alcohol. In terms of biological role, functions as an intracellular leucine sensor that negatively regulates the mTORC1 signaling pathway through the GATOR complex. In absence of leucine, binds the GATOR subcomplex GATOR2 and prevents mTORC1 signaling. Binding of leucine to SESN2 disrupts its interaction with GATOR2 thereby activating the TORC1 signaling pathway. This stress-inducible metabolic regulator also plays a role in protection against oxidative and genotoxic stresses. May negatively regulate protein translation in response to endoplasmic reticulum stress, via mTORC1. May positively regulate the transcription by NFE2L2 of genes involved in the response to oxidative stress by facilitating the SQSTM1-mediated autophagic degradation of KEAP1. May also mediate TP53 inhibition of TORC1 signaling upon genotoxic stress. Moreover, may prevent the accumulation of reactive oxygen species (ROS) through the alkylhydroperoxide reductase activity born by the N-terminal domain of the protein. Was originally reported to contribute to oxidative stress resistance by reducing PRDX1. However, this could not be confirmed. In Mus musculus (Mouse), this protein is Sestrin-2.